The sequence spans 492 residues: Probable glycine dehydrogenase (decarboxylating) subunit 2 (492 aa).

Lysine 274 bears the N6-(pyridoxal phosphate)lysine mark.

Belongs to the GcvP family. C-terminal subunit subfamily. The glycine cleavage system is composed of four proteins: P, T, L and H. In this organism, the P 'protein' is a heterodimer of two subunits. It depends on pyridoxal 5'-phosphate as a cofactor.

The catalysed reaction is N(6)-[(R)-lipoyl]-L-lysyl-[glycine-cleavage complex H protein] + glycine + H(+) = N(6)-[(R)-S(8)-aminomethyldihydrolipoyl]-L-lysyl-[glycine-cleavage complex H protein] + CO2. Its function is as follows. The glycine cleavage system catalyzes the degradation of glycine. The P protein binds the alpha-amino group of glycine through its pyridoxal phosphate cofactor; CO(2) is released and the remaining methylamine moiety is then transferred to the lipoamide cofactor of the H protein. This is Probable glycine dehydrogenase (decarboxylating) subunit 2 from Staphylococcus saprophyticus subsp. saprophyticus (strain ATCC 15305 / DSM 20229 / NCIMB 8711 / NCTC 7292 / S-41).